The chain runs to 511 residues: Maturase K (511 aa).

It belongs to the intron maturase 2 family. MatK subfamily.

It is found in the plastid. Its subcellular location is the chloroplast. Functionally, usually encoded in the trnK tRNA gene intron. Probably assists in splicing its own and other chloroplast group II introns. In Hordeum bulbosum (Bulbous barley), this protein is Maturase K.